The sequence spans 106 residues: L-rhamnose mutarotase (106 aa).

A substrate-binding site is contributed by Y20. Catalysis depends on H24, which acts as the Proton donor. Residues Y43 and 78 to 79 contribute to the substrate site; that span reads WW.

Belongs to the rhamnose mutarotase family. As to quaternary structure, homodimer.

The protein resides in the cytoplasm. The catalysed reaction is alpha-L-rhamnose = beta-L-rhamnose. It participates in carbohydrate metabolism; L-rhamnose metabolism. Functionally, involved in the anomeric conversion of L-rhamnose. The sequence is that of L-rhamnose mutarotase from Leptothrix cholodnii (strain ATCC 51168 / LMG 8142 / SP-6) (Leptothrix discophora (strain SP-6)).